The primary structure comprises 158 residues: Transmembrane protein 50B (158 aa).

An N-acetylalanine modification is found at Ala-2. Transmembrane regions (helical) follow at residues 28–48, 56–76, 98–118, and 128–148; these read VVAG…AVVY, HAFH…NAVS, WLFI…WILF, and VYPG…TLIY.

Belongs to the UPF0220 family. May form homotrimers or homodimers.

Its subcellular location is the endoplasmic reticulum membrane. It is found in the golgi apparatus membrane. The polypeptide is Transmembrane protein 50B (TMEM50B) (Bos taurus (Bovine)).